Consider the following 65-residue polypeptide: Large ribosomal subunit protein bL35 (65 aa).

Residues 1-26 (MPKIKTLRGAAKRFKKTASGGFKRKQ) are disordered. Basic residues predominate over residues 10–26 (AAKRFKKTASGGFKRKQ).

It belongs to the bacterial ribosomal protein bL35 family.

This is Large ribosomal subunit protein bL35 from Histophilus somni (strain 2336) (Haemophilus somnus).